The chain runs to 137 residues: Succinate dehydrogenase cytochrome b560 subunit (137 aa).

The next 2 membrane-spanning stretches (helical) occupy residues 31–51 and 60–80; these read AFLATMVLFSILFFKIGDLSL and FFFLTFYLNWFIISLVNFTLL. Position 85 (His85) interacts with heme. Residues 106-126 form a helical membrane-spanning segment; it reads VYTSGIIMLFCAAFLALLNII.

Belongs to the cytochrome b560 family. In terms of assembly, forms part of complex II containing four subunits: a 70 kDa flavoprotein (FP), a 27 kDa iron-sulfur protein (IP), a cytochrome B and a membrane-anchoring protein. Heme is required as a cofactor.

It is found in the mitochondrion inner membrane. It functions in the pathway carbohydrate metabolism; tricarboxylic acid cycle. Its function is as follows. Membrane-anchoring subunit of succinate dehydrogenase (SDH) that is involved in complex II of the mitochondrial electron transport chain and is responsible for transferring electrons from succinate to ubiquinone (coenzyme Q). This is Succinate dehydrogenase cytochrome b560 subunit (SDH3) from Marchantia polymorpha (Common liverwort).